Here is a 481-residue protein sequence, read N- to C-terminus: Glutamyl-tRNA(Gln) amidotransferase subunit A (481 aa).

Residues Lys76 and Ser151 each act as charge relay system in the active site. The active-site Acyl-ester intermediate is the Ser175.

This sequence belongs to the amidase family. GatA subfamily. As to quaternary structure, heterotrimer of A, B and C subunits.

The catalysed reaction is L-glutamyl-tRNA(Gln) + L-glutamine + ATP + H2O = L-glutaminyl-tRNA(Gln) + L-glutamate + ADP + phosphate + H(+). Functionally, allows the formation of correctly charged Gln-tRNA(Gln) through the transamidation of misacylated Glu-tRNA(Gln) in organisms which lack glutaminyl-tRNA synthetase. The reaction takes place in the presence of glutamine and ATP through an activated gamma-phospho-Glu-tRNA(Gln). The protein is Glutamyl-tRNA(Gln) amidotransferase subunit A of Chlorobaculum tepidum (strain ATCC 49652 / DSM 12025 / NBRC 103806 / TLS) (Chlorobium tepidum).